A 326-amino-acid chain; its full sequence is Type II secretion system protein K (326 aa).

Positions 1–7 (MNHRQRG) are cleaved as a propeptide — leader sequence. Residues 8-28 (IALLMVLLILALMMVLASAMT) traverse the membrane as a helical segment. Residues 29–326 (ERSARMYQQT…RYGIYWVADE (298 aa)) lie on the Periplasmic side of the membrane.

Belongs to the GSP K family. Type II secretion is composed of four main components: the outer membrane complex, the inner membrane complex, the cytoplasmic secretion ATPase and the periplasm-spanning pseudopilus. Interacts with core component PulG. Cleaved by prepilin peptidase.

It is found in the cell inner membrane. Functionally, component of the type II secretion system required for the energy-dependent secretion of extracellular factors such as proteases and toxins from the periplasm. Plays a role in pseudopilus assembly and seems to control its length. Interacts with the pseudopilus tip complex that is critical for the recognition and binding of secretion substrates. The protein is Type II secretion system protein K (pulK) of Klebsiella pneumoniae.